Here is a 57-residue protein sequence, read N- to C-terminus: MAVPKKKTSKSKRDKRRATWRHKAVVEAQKALSLGKSILTGRSTFVYPTAEEEEEES.

Residues 1 to 22 (MAVPKKKTSKSKRDKRRATWRH) are disordered.

Belongs to the bacterial ribosomal protein bL32 family.

This Nostoc punctiforme (strain ATCC 29133 / PCC 73102) protein is Large ribosomal subunit protein bL32.